A 352-amino-acid chain; its full sequence is Photosystem II D2 protein (352 aa).

The residue at position 2 (Thr2) is an N-acetylthreonine. The residue at position 2 (Thr2) is a Phosphothreonine. The chain crosses the membrane as a helical span at residues 40 to 60 (CAYMALGGWLTGTTFVTSWYT). Residue His117 coordinates chlorophyll a. The chain crosses the membrane as a helical span at residues 124-140 (GFMLRQFEIAQSLKLRP). The pheophytin a site is built by Gln129 and Asn142. The chain crosses the membrane as a helical span at residues 152-165 (VFVSVFLIYPLGQA). Residue His197 participates in chlorophyll a binding. A helical transmembrane segment spans residues 207–227 (AALLCAIHGATVENTLFEDGD). His214 and Phe261 together coordinate a plastoquinone. His214 contributes to the Fe cation binding site. His268 serves as a coordination point for Fe cation. Residues 278–294 (GLWMSAIGVVGLALNLR) traverse the membrane as a helical segment.

This sequence belongs to the reaction center PufL/M/PsbA/D family. In terms of assembly, PSII is composed of 1 copy each of membrane proteins PsbA, PsbB, PsbC, PsbD, PsbE, PsbF, PsbH, PsbI, PsbJ, PsbK, PsbL, PsbM, PsbT, PsbX, PsbY, PsbZ, Psb30/Ycf12, at least 3 peripheral proteins of the oxygen-evolving complex and a large number of cofactors. It forms dimeric complexes. The D1/D2 heterodimer binds P680, chlorophylls that are the primary electron donor of PSII, and subsequent electron acceptors. It shares a non-heme iron and each subunit binds pheophytin, quinone, additional chlorophylls, carotenoids and lipids. There is also a Cl(-1) ion associated with D1 and D2, which is required for oxygen evolution. The PSII complex binds additional chlorophylls, carotenoids and specific lipids. serves as cofactor.

Its subcellular location is the plastid. It is found in the chloroplast thylakoid membrane. It carries out the reaction 2 a plastoquinone + 4 hnu + 2 H2O = 2 a plastoquinol + O2. Photosystem II (PSII) is a light-driven water:plastoquinone oxidoreductase that uses light energy to abstract electrons from H(2)O, generating O(2) and a proton gradient subsequently used for ATP formation. It consists of a core antenna complex that captures photons, and an electron transfer chain that converts photonic excitation into a charge separation. The D1/D2 (PsbA/PsbD) reaction center heterodimer binds P680, the primary electron donor of PSII as well as several subsequent electron acceptors. D2 is needed for assembly of a stable PSII complex. The sequence is that of Photosystem II D2 protein from Stigeoclonium helveticum (Green alga).